A 350-amino-acid chain; its full sequence is MTTAVARLQPSASGAKTRPVFPFSAIVGQEDMKLALLLTAVDPGIGGVLVFGDRGTGKSTAVRALAALLPEIEAVEGCPVSSPNVEMIPDWATVLSTNVIRKPTPVVDLPLGVSEDRVVGALDIERAISKGEKAFEPGLLARANRGYLYIDECNLLEDHIVDLLLDVAQSGENVVERDGLSIRHPARFVLVGSGNPEEGDLRPQLLDRFGLSVEVLSPRDVETRVEVIRRRDTYDADPKAFLEEWRPKDMDIRNQILEARERLPKVEAPNTALYDCAALCIALGSDGLRGELTLLRSARALAALEGATAVGRDHLKRVATMALSHRLRRDPLDEAGSTARVARTVEETLP.

52 to 59 (GDRGTGKS) is a binding site for ATP.

The protein belongs to the Mg-chelatase subunits D/I family.

The enzyme catalyses protoporphyrin IX + Mg(2+) + ATP + H2O = Mg-protoporphyrin IX + ADP + phosphate + 3 H(+). It participates in porphyrin-containing compound metabolism; bacteriochlorophyll biosynthesis. In terms of biological role, involved in bacteriochlorophyll biosynthesis; introduces a magnesium ion into protoporphyrin IX to yield Mg-protoporphyrin IX. In Rhodobacter capsulatus (strain ATCC BAA-309 / NBRC 16581 / SB1003), this protein is Magnesium-chelatase 38 kDa subunit (bchI).